Reading from the N-terminus, the 296-residue chain is NAD kinase (296 aa).

Asp72 (proton acceptor) is an active-site residue. Residues 72-73 (DG), 146-147 (ND), Arg157, Arg174, Asp176, 187-192 (TAYALS), and Gln247 contribute to the NAD(+) site.

This sequence belongs to the NAD kinase family. A divalent metal cation serves as cofactor.

The protein localises to the cytoplasm. The catalysed reaction is NAD(+) + ATP = ADP + NADP(+) + H(+). Its function is as follows. Involved in the regulation of the intracellular balance of NAD and NADP, and is a key enzyme in the biosynthesis of NADP. Catalyzes specifically the phosphorylation on 2'-hydroxyl of the adenosine moiety of NAD to yield NADP. This Hahella chejuensis (strain KCTC 2396) protein is NAD kinase.